The primary structure comprises 398 residues: tRNA(Ile)-lysidine synthase (398 aa).

Position 25–30 (serine 25–serine 30) interacts with ATP.

This sequence belongs to the tRNA(Ile)-lysidine synthase family.

The protein localises to the cytoplasm. It catalyses the reaction cytidine(34) in tRNA(Ile2) + L-lysine + ATP = lysidine(34) in tRNA(Ile2) + AMP + diphosphate + H(+). In terms of biological role, ligates lysine onto the cytidine present at position 34 of the AUA codon-specific tRNA(Ile) that contains the anticodon CAU, in an ATP-dependent manner. Cytidine is converted to lysidine, thus changing the amino acid specificity of the tRNA from methionine to isoleucine. The protein is tRNA(Ile)-lysidine synthase of Francisella tularensis subsp. novicida (strain U112).